Reading from the N-terminus, the 164-residue chain is Phosphopantetheine adenylyltransferase (164 aa).

Belongs to the eukaryotic CoaD family.

The protein localises to the cytoplasm. It catalyses the reaction (R)-4'-phosphopantetheine + ATP + H(+) = 3'-dephospho-CoA + diphosphate. The protein operates within cofactor biosynthesis; coenzyme A biosynthesis. Reversibly transfers an adenylyl group from ATP to 4'-phosphopantetheine, yielding dephospho-CoA (dPCoA) and pyrophosphate. The protein is Phosphopantetheine adenylyltransferase of Methanothermobacter thermautotrophicus (strain ATCC 29096 / DSM 1053 / JCM 10044 / NBRC 100330 / Delta H) (Methanobacterium thermoautotrophicum).